Consider the following 555-residue polypeptide: Inositol 1,4,5-trisphosphate receptor-interacting protein-like 1 (555 aa).

The N-terminal stretch at 1-24 is a signal peptide; it reads MNVDAEASMAVISLLFLAVMYVVH. At 25 to 103 the chain is on the extracellular side; it reads HPLMVSDRMD…WPFQADGQEG (79 aa). The stretch at 38 to 74 forms a coiled coil; sequence LARSRQLEKRMSEEMRLLEMEFEERKRAAEQRQKAEN. The chain crosses the membrane as a helical span at residues 104-124; it reads PLGWMLGNLWNTGLFCLFLVF. Residues 125 to 555 lie on the Cytoplasmic side of the membrane; it reads ELLRQNMQHE…LPHAPLAAAP (431 aa).

Belongs to the ITPRIP family. In terms of tissue distribution, expressed in testis and tumoral cells.

Its subcellular location is the cell membrane. Its function is as follows. Functions as a ligand of CD3E, inhibiting TCR-CD3 complex signaling to regulate T cell activation. Induces stable CD3E-NCK1 binding, thereby preventing the CD3E-ZAP70 interaction and subsequently inhibiting the activation of the downstream ERK-NFkB signaling cascade and calcium influx. This Homo sapiens (Human) protein is Inositol 1,4,5-trisphosphate receptor-interacting protein-like 1.